The sequence spans 1025 residues: Retinoblastoma-related protein (1025 aa).

Residues 1–20 (MEDHPPKPSIPTADASLSNH) form a disordered region. The segment at 422 to 623 (TPVTTAMTTA…EKGSSMYNSL (202 aa)) is domain A. The interval 422 to 875 (TPVTTAMTTA…NEIFIPAVKP (454 aa)) is pocket. The interval 624–744 (TVARPALSAE…PGAGGETCAE (121 aa)) is spacer. The segment at 745-875 (TAINVFFSKI…NEIFIPAVKP (131 aa)) is domain B.

Belongs to the retinoblastoma protein (RB) family.

It localises to the nucleus. Functionally, regulator of biological processes that recruits a histone deacetylase to control gene transcription. May play a role in the entry into mitosis, negatively regulating the cell proliferation. Formation of stable complexes with geminiviridae replication-associated proteins may create a cellular environment which favors viral DNA replication. This chain is Retinoblastoma-related protein (pRB), found in Camellia sinensis (Tea plant).